Reading from the N-terminus, the 147-residue chain is MTTTIYILNGPNLNLLGQRQPEIYGHETLADVERRCAAVAAEKGFSVRLFQSNHEGAIVDQIHEARQAACGIVINPAAYTHTSVAILDALHAFEGPVIECHISNVHKRESFRHHSYVSLRADGVLAGFGIEGYELAVRRICSLCAGG.

The active-site Proton acceptor is tyrosine 24. Positions 75, 81, and 88 each coordinate substrate. Catalysis depends on histidine 101, which acts as the Proton donor. Residues 102 to 103 (IS) and arginine 112 contribute to the substrate site.

It belongs to the type-II 3-dehydroquinase family. Homododecamer.

The enzyme catalyses 3-dehydroquinate = 3-dehydroshikimate + H2O. Its pathway is metabolic intermediate biosynthesis; chorismate biosynthesis; chorismate from D-erythrose 4-phosphate and phosphoenolpyruvate: step 3/7. Its function is as follows. Catalyzes a trans-dehydration via an enolate intermediate. In Cereibacter sphaeroides (strain KD131 / KCTC 12085) (Rhodobacter sphaeroides), this protein is 3-dehydroquinate dehydratase.